A 321-amino-acid chain; its full sequence is Putative pyridoxal kinase (321 aa).

Residues Ser23 and Tyr144 each coordinate substrate. Residues 203 to 204 and 230 to 242 each bind ATP; these read TS and TFPRLVGQFVGTG. Asp243 lines the substrate pocket.

This sequence belongs to the pyridoxine kinase family. Zn(2+) serves as cofactor. Mg(2+) is required as a cofactor.

The catalysed reaction is pyridoxal + ATP = pyridoxal 5'-phosphate + ADP + H(+). Its function is as follows. Required for synthesis of pyridoxal-5-phosphate from vitamin B6. The chain is Putative pyridoxal kinase from Caenorhabditis elegans.